Consider the following 69-residue polypeptide: UPF0437 protein AZC_3451 (69 aa).

This sequence belongs to the UPF0437 family.

The polypeptide is UPF0437 protein AZC_3451 (Azorhizobium caulinodans (strain ATCC 43989 / DSM 5975 / JCM 20966 / LMG 6465 / NBRC 14845 / NCIMB 13405 / ORS 571)).